Here is a 562-residue protein sequence, read N- to C-terminus: DNA-binding protein MutS2 (562 aa).

ATP is bound at residue 380 to 387; that stretch reads GANSGGKT.

This sequence belongs to the DNA mismatch repair MutS family. Archaeal Muts2 subfamily. Multimer. Requires Co(2+) as cofactor. Mn(2+) serves as cofactor.

Has ATPase and non-specific DNA-binding activities. May be involved in recombination and/or recombinational repair. Not involved in mismatch repair. This is DNA-binding protein MutS2 from Pyrococcus furiosus (strain ATCC 43587 / DSM 3638 / JCM 8422 / Vc1).